Consider the following 148-residue polypeptide: MSIIDNRKAFYDYSVEERYEAGLVLEGWEVKALRAGRGQIKEGYVVIKNNELFLIGTHISPLPEASTHINPDPVRTRKLLLHSEEISKLIGKVEQRGYTLVPLNFHYKGGRVKCEIGLAKGKKQHDKRETEKKRDWEREKARLMRSPG.

The interval 119 to 148 (AKGKKQHDKRETEKKRDWEREKARLMRSPG) is disordered. The segment covering 126-142 (DKRETEKKRDWEREKAR) has biased composition (basic and acidic residues).

Belongs to the SmpB family.

It is found in the cytoplasm. Its function is as follows. Required for rescue of stalled ribosomes mediated by trans-translation. Binds to transfer-messenger RNA (tmRNA), required for stable association of tmRNA with ribosomes. tmRNA and SmpB together mimic tRNA shape, replacing the anticodon stem-loop with SmpB. tmRNA is encoded by the ssrA gene; the 2 termini fold to resemble tRNA(Ala) and it encodes a 'tag peptide', a short internal open reading frame. During trans-translation Ala-aminoacylated tmRNA acts like a tRNA, entering the A-site of stalled ribosomes, displacing the stalled mRNA. The ribosome then switches to translate the ORF on the tmRNA; the nascent peptide is terminated with the 'tag peptide' encoded by the tmRNA and targeted for degradation. The ribosome is freed to recommence translation, which seems to be the essential function of trans-translation. The sequence is that of SsrA-binding protein from Paraburkholderia xenovorans (strain LB400).